Here is a 393-residue protein sequence, read N- to C-terminus: Pectate lyase A (393 aa).

Residues 1-32 form the signal peptide; the sequence is MMNKASGRSFTRSSKYLLATLIAGMMASGVSA. Ca(2+) is bound by residues glutamate 174, aspartate 176, aspartate 216, and aspartate 220. Residue arginine 273 is part of the active site. An intrachain disulfide couples cysteine 330 to cysteine 358.

Belongs to the polysaccharide lyase 1 family. PLADES subfamily. Requires Ca(2+) as cofactor.

Its subcellular location is the secreted. The catalysed reaction is Eliminative cleavage of (1-&gt;4)-alpha-D-galacturonan to give oligosaccharides with 4-deoxy-alpha-D-galact-4-enuronosyl groups at their non-reducing ends.. Its pathway is glycan metabolism; pectin degradation; 2-dehydro-3-deoxy-D-gluconate from pectin: step 2/5. Involved in maceration and soft-rotting of plant tissue. The sequence is that of Pectate lyase A (pelA) from Dickeya chrysanthemi (Pectobacterium chrysanthemi).